The following is a 235-amino-acid chain: Octanoyltransferase LIP2, mitochondrial (235 aa).

The N-terminal 32 residues, 1–32 (MRSPRTLEVWKLGTVNYLKSLKLQEKLVSERK), are a transit peptide targeting the mitochondrion. The region spanning 34–218 (HQIPDTLLSL…CLAKAFSYDD (185 aa)) is the BPL/LPL catalytic domain. Substrate-binding positions include 79 to 86 (RGGDITFH), 147 to 149 (AIG), and 160 to 162 (GLA). Catalysis depends on cysteine 178, which acts as the Acyl-thioester intermediate.

The protein belongs to the LipB family. As to expression, expressed in leaves. Expressed in roots, rosette leaves, cauline leaves, stems and siliques.

Its subcellular location is the mitochondrion. It carries out the reaction octanoyl-[ACP] + L-lysyl-[protein] = N(6)-octanoyl-L-lysyl-[protein] + holo-[ACP] + H(+). Its pathway is protein modification; protein lipoylation via endogenous pathway; protein N(6)-(lipoyl)lysine from octanoyl-[acyl-carrier-protein]: step 1/2. In terms of biological role, catalyzes the transfer of endogenously produced octanoic acid from octanoyl-acyl-carrier-protein onto the lipoyl domains of lipoate-dependent enzymes. Lipoyl-ACP can also act as a substrate although octanoyl-ACP is likely to be the physiological substrate. Together with LIP1 is essential for mitochondrial protein lipoylation during seed development. Required for the lipoylation of mitochondrial 2-oxoglutarate dehydrogenase component E2 proteins in leaves and roots. This is Octanoyltransferase LIP2, mitochondrial from Arabidopsis thaliana (Mouse-ear cress).